A 65-amino-acid polypeptide reads, in one-letter code: LTCLICPEKYCNKVHTCRNGENQCFKRFNERKLLGKRYTRGCAATCPEAKPREIVECCTTDRCNK.

5 disulfides stabilise this stretch: Cys-3/Cys-24, Cys-6/Cys-11, Cys-17/Cys-42, Cys-46/Cys-57, and Cys-58/Cys-63.

Belongs to the three-finger toxin family. Ancestral subfamily. Orphan group II sub-subfamily. As to expression, expressed by the venom gland.

Its subcellular location is the secreted. Functionally, binds with low affinity to muscular (alpha-1-beta-1-delta-epsilon/CHRNA1-CHRNB1-CHRND-CHRNE) and very low affinity to neuronal (alpha-7/CHRNA7) nicotinic acetylcholine receptor (nAChR). The polypeptide is Weak toxin CM-11 (Naja haje haje (Egyptian cobra)).